The sequence spans 531 residues: CCA tRNA nucleotidyltransferase, mitochondrial (531 aa).

Belongs to the tRNA nucleotidyltransferase/poly(A) polymerase family.

Its subcellular location is the mitochondrion. It localises to the cytoplasm. It is found in the nucleus. The catalysed reaction is a tRNA precursor + 2 CTP + ATP = a tRNA with a 3' CCA end + 3 diphosphate. In terms of biological role, nucleotidyltransferase that catalyzes the addition and repair of the essential 3'-terminal CCA sequence in tRNAs, which is necessary for the attachment of amino acids to the 3' terminus of tRNA molecules, using CTP and ATP as substrates. tRNA 3'-terminal CCA addition is required both for tRNA processing and repair. Also involved in tRNA surveillance by mediating tandem CCA addition to generate a CCACCA at the 3' terminus of unstable tRNAs. While stable tRNAs receive only 3'-terminal CCA, unstable tRNAs are marked with CCACCA and rapidly degraded. The structural flexibility of RNA controls the choice between CCA versus CCACCA addition: following the first CCA addition cycle, nucleotide-binding to the active site triggers a clockwise screw motion, producing torque on the RNA. This ejects stable RNAs, whereas unstable RNAs are refolded while bound to the enzyme and subjected to a second CCA catalytic cycle. The protein is CCA tRNA nucleotidyltransferase, mitochondrial (CCA1) of Candida glabrata (strain ATCC 2001 / BCRC 20586 / JCM 3761 / NBRC 0622 / NRRL Y-65 / CBS 138) (Yeast).